The primary structure comprises 416 residues: Phosphoribosylamine--glycine ligase (416 aa).

The ATP-grasp domain occupies lysine 107–threonine 303. Leucine 133–serine 184 provides a ligand contact to ATP. 2 residues coordinate Mg(2+): glutamate 273 and asparagine 275.

Belongs to the GARS family. Mg(2+) is required as a cofactor. It depends on Mn(2+) as a cofactor.

The catalysed reaction is 5-phospho-beta-D-ribosylamine + glycine + ATP = N(1)-(5-phospho-beta-D-ribosyl)glycinamide + ADP + phosphate + H(+). Its pathway is purine metabolism; IMP biosynthesis via de novo pathway; N(1)-(5-phospho-D-ribosyl)glycinamide from 5-phospho-alpha-D-ribose 1-diphosphate: step 2/2. The sequence is that of Phosphoribosylamine--glycine ligase from Streptomyces coelicolor (strain ATCC BAA-471 / A3(2) / M145).